A 188-amino-acid chain; its full sequence is uncharacterized protein (188 aa).

Positions 62 to 77 (ITGEKPLIKLNESTEK) match the L5-specific motif motif.

The protein localises to the mitochondrion. This is an uncharacterized protein from Dictyostelium discoideum (Social amoeba).